A 274-amino-acid chain; its full sequence is 2,3,4,5-tetrahydropyridine-2,6-dicarboxylate N-succinyltransferase (274 aa).

Belongs to the transferase hexapeptide repeat family.

The protein localises to the cytoplasm. It carries out the reaction (S)-2,3,4,5-tetrahydrodipicolinate + succinyl-CoA + H2O = (S)-2-succinylamino-6-oxoheptanedioate + CoA. It functions in the pathway amino-acid biosynthesis; L-lysine biosynthesis via DAP pathway; LL-2,6-diaminopimelate from (S)-tetrahydrodipicolinate (succinylase route): step 1/3. The sequence is that of 2,3,4,5-tetrahydropyridine-2,6-dicarboxylate N-succinyltransferase from Proteus mirabilis (strain HI4320).